A 261-amino-acid polypeptide reads, in one-letter code: Thiazole synthase (261 aa).

Lys-97 functions as the Schiff-base intermediate with DXP in the catalytic mechanism. Residues Gly-158, 184-185 (AG), and 206-207 (AS) each bind 1-deoxy-D-xylulose 5-phosphate.

It belongs to the ThiG family. In terms of assembly, homotetramer. Forms heterodimers with either ThiH or ThiS.

It is found in the cytoplasm. It catalyses the reaction [ThiS sulfur-carrier protein]-C-terminal-Gly-aminoethanethioate + 2-iminoacetate + 1-deoxy-D-xylulose 5-phosphate = [ThiS sulfur-carrier protein]-C-terminal Gly-Gly + 2-[(2R,5Z)-2-carboxy-4-methylthiazol-5(2H)-ylidene]ethyl phosphate + 2 H2O + H(+). The protein operates within cofactor biosynthesis; thiamine diphosphate biosynthesis. Catalyzes the rearrangement of 1-deoxy-D-xylulose 5-phosphate (DXP) to produce the thiazole phosphate moiety of thiamine. Sulfur is provided by the thiocarboxylate moiety of the carrier protein ThiS. In vitro, sulfur can be provided by H(2)S. The protein is Thiazole synthase of Corynebacterium diphtheriae (strain ATCC 700971 / NCTC 13129 / Biotype gravis).